Here is a 464-residue protein sequence, read N- to C-terminus: Argininosuccinate lyase (464 aa).

It belongs to the lyase 1 family. Argininosuccinate lyase subfamily.

Its subcellular location is the cytoplasm. The enzyme catalyses 2-(N(omega)-L-arginino)succinate = fumarate + L-arginine. The protein operates within amino-acid biosynthesis; L-arginine biosynthesis; L-arginine from L-ornithine and carbamoyl phosphate: step 3/3. This Crocosphaera subtropica (strain ATCC 51142 / BH68) (Cyanothece sp. (strain ATCC 51142)) protein is Argininosuccinate lyase.